Reading from the N-terminus, the 151-residue chain is Protein SprT-like (151 aa).

The 140-residue stretch at 7-146 (QSLTESIAIK…CGRCGGILKL (140 aa)) folds into the SprT-like domain. H67 is a binding site for Zn(2+). E68 is an active-site residue. H71 contacts Zn(2+).

This sequence belongs to the SprT family. It depends on Zn(2+) as a cofactor.

It is found in the cytoplasm. The sequence is that of Protein SprT-like from Staphylococcus epidermidis (strain ATCC 35984 / DSM 28319 / BCRC 17069 / CCUG 31568 / BM 3577 / RP62A).